The chain runs to 170 residues: Ureidoglycolate lyase (170 aa).

Belongs to the ureidoglycolate lyase family. Homodimer. Ni(2+) serves as cofactor.

The catalysed reaction is (S)-ureidoglycolate = urea + glyoxylate. Its pathway is nitrogen metabolism; (S)-allantoin degradation. Functionally, catalyzes the catabolism of the allantoin degradation intermediate (S)-ureidoglycolate, generating urea and glyoxylate. Involved in the utilization of allantoin as nitrogen source. The polypeptide is Ureidoglycolate lyase (Pseudomonas syringae pv. tomato (strain ATCC BAA-871 / DC3000)).